The chain runs to 196 residues: SPRY domain-containing protein 7 (196 aa).

Position 2 is an N-acetylalanine (Ala2). Residues 2–184 (ATSVLCCLRC…FSEFYHTPPP (183 aa)) form the B30.2/SPRY domain.

This chain is SPRY domain-containing protein 7 (SPRYD7), found in Homo sapiens (Human).